Here is a 292-residue protein sequence, read N- to C-terminus: Phosphatidylglycerol--prolipoprotein diacylglyceryl transferase (292 aa).

Helical transmembrane passes span 21–41 (VSLH…MWLA), 60–80 (LLYA…VLFY), 98–118 (GGMS…VFAH), 124–144 (FFQV…AGRL), 198–218 (SQLY…NLFI), 225–245 (GAVS…VEFF), and 258–278 (ISMG…MMIW). Residue Arg143 participates in a 1,2-diacyl-sn-glycero-3-phospho-(1'-sn-glycerol) binding.

It belongs to the Lgt family.

The protein localises to the cell inner membrane. It carries out the reaction L-cysteinyl-[prolipoprotein] + a 1,2-diacyl-sn-glycero-3-phospho-(1'-sn-glycerol) = an S-1,2-diacyl-sn-glyceryl-L-cysteinyl-[prolipoprotein] + sn-glycerol 1-phosphate + H(+). It participates in protein modification; lipoprotein biosynthesis (diacylglyceryl transfer). In terms of biological role, catalyzes the transfer of the diacylglyceryl group from phosphatidylglycerol to the sulfhydryl group of the N-terminal cysteine of a prolipoprotein, the first step in the formation of mature lipoproteins. This Erwinia tasmaniensis (strain DSM 17950 / CFBP 7177 / CIP 109463 / NCPPB 4357 / Et1/99) protein is Phosphatidylglycerol--prolipoprotein diacylglyceryl transferase.